The sequence spans 344 residues: MTSNFSQAPLQLCYENVNASCIKTPYSPGLRVLLYMVFGFGAVLAVCGNLLVVISVLHFKQLHSPANFLIASLASADFLVGISVMPFSMVRSIESCWYFGDTFCSLHSCCDAAFCYSSLFHLCFISVDRYIAVTDPLVYPTKFTVSVSGICISISWILPLVYSSAVFYTGISATGIENLVSALNCVGGCQIVVNQDWVLIDFLLFLIPTLVMIILYSKIFLVAKQQAVKIETSISGSKGESSLESHKARVAKRERKAAKTLGVTVVAFMVSWLPYTIDTLIDAFMGFITPAYVYEICCWSAYYNSAMNPLIYAFFYPWFRKAIKLILSGEILKSHSSTMSLFSE.

Topologically, residues 1–33 (MTSNFSQAPLQLCYENVNASCIKTPYSPGLRVL) are extracellular. N-linked (GlcNAc...) asparagine glycosylation is found at Asn4 and Asn18. 2 disulfide bridges follow: Cys21–Cys185 and Cys96–Cys189. The chain crosses the membrane as a helical span at residues 34-54 (LYMVFGFGAVLAVCGNLLVVI). At 55-67 (SVLHFKQLHSPAN) the chain is on the cytoplasmic side. The helical transmembrane segment at 68–88 (FLIASLASADFLVGISVMPFS) threads the bilayer. At 89–102 (MVRSIESCWYFGDT) the chain is on the extracellular side. Residues 103–127 (FCSLHSCCDAAFCYSSLFHLCFISV) traverse the membrane as a helical segment. Topologically, residues 128 to 146 (DRYIAVTDPLVYPTKFTVS) are cytoplasmic. Residues 147–167 (VSGICISISWILPLVYSSAVF) traverse the membrane as a helical segment. Residues 168-196 (YTGISATGIENLVSALNCVGGCQIVVNQD) are Extracellular-facing. A helical membrane pass occupies residues 197–217 (WVLIDFLLFLIPTLVMIILYS). Over 218–260 (KIFLVAKQQAVKIETSISGSKGESSLESHKARVAKRERKAAKT) the chain is Cytoplasmic. A helical transmembrane segment spans residues 261 to 281 (LGVTVVAFMVSWLPYTIDTLI). The Extracellular segment spans residues 282-291 (DAFMGFITPA). The helical transmembrane segment at 292–314 (YVYEICCWSAYYNSAMNPLIYAF) threads the bilayer. The Cytoplasmic portion of the chain corresponds to 315 to 344 (FYPWFRKAIKLILSGEILKSHSSTMSLFSE).

This sequence belongs to the G-protein coupled receptor 1 family.

Its subcellular location is the cell membrane. Its function is as follows. Olfactory receptor activated by trace amines. Trace amine compounds are enriched in animal body fluids and act on trace amine-associated receptors (TAARs) to elicit both intraspecific and interspecific innate behaviors. Ligand-binding causes a conformation change that triggers signaling via G(s)-class of G alpha proteins (GNAL or GNAS). The protein is Trace amine-associated receptor 8a of Rattus norvegicus (Rat).